Reading from the N-terminus, the 133-residue chain is Ribosome-binding factor A (133 aa).

Belongs to the RbfA family. As to quaternary structure, monomer. Binds 30S ribosomal subunits, but not 50S ribosomal subunits or 70S ribosomes.

The protein localises to the cytoplasm. In terms of biological role, one of several proteins that assist in the late maturation steps of the functional core of the 30S ribosomal subunit. Associates with free 30S ribosomal subunits (but not with 30S subunits that are part of 70S ribosomes or polysomes). Required for efficient processing of 16S rRNA. May interact with the 5'-terminal helix region of 16S rRNA. This chain is Ribosome-binding factor A, found in Bordetella pertussis (strain Tohama I / ATCC BAA-589 / NCTC 13251).